Reading from the N-terminus, the 213-residue chain is Receptor-binding cancer antigen expressed on SiSo cells (213 aa).

Residues 1–7 lie on the Extracellular side of the membrane; sequence MAITQFR. The chain crosses the membrane as a helical; Signal-anchor for type III membrane protein span at residues 8-27; the sequence is LFKVCTCLATVFSFLKRLIC. Residues 28–213 are Cytoplasmic-facing; the sequence is RSGRGRKLSG…EQNKIGVKLS (186 aa). Ser-36 carries the post-translational modification Phosphoserine. Thr-41 carries the phosphothreonine modification. The residue at position 94 (Tyr-94) is a Phosphotyrosine. Positions 163-211 form a coiled coil; the sequence is EDAAWQAEEVLRQQKIADREKRAAEQQRKKMEKEAQRLMKKEQNKIGVK. The span at 179–206 shows a compositional bias: basic and acidic residues; that stretch reads ADREKRAAEQQRKKMEKEAQRLMKKEQN. The interval 179-213 is disordered; the sequence is ADREKRAAEQQRKKMEKEAQRLMKKEQNKIGVKLS.

In terms of assembly, homodimer. In terms of tissue distribution, widely expressed. Expressed in heart, brain, spleen, liver, kidney and testis.

The protein resides in the golgi apparatus membrane. May participate in suppression of cell proliferation and induces apoptotic cell death through activation of interleukin-1-beta converting enzyme (ICE)-like proteases. In Mus musculus (Mouse), this protein is Receptor-binding cancer antigen expressed on SiSo cells (Ebag9).